Reading from the N-terminus, the 322-residue chain is 4-hydroxy-3-methylbut-2-enyl diphosphate reductase (322 aa).

[4Fe-4S] cluster is bound at residue Cys12. (2E)-4-hydroxy-3-methylbut-2-enyl diphosphate contacts are provided by His43 and His81. Dimethylallyl diphosphate-binding residues include His43 and His81. Residues His43 and His81 each coordinate isopentenyl diphosphate. Cys103 is a [4Fe-4S] cluster binding site. (2E)-4-hydroxy-3-methylbut-2-enyl diphosphate is bound at residue His131. Position 131 (His131) interacts with dimethylallyl diphosphate. His131 lines the isopentenyl diphosphate pocket. Residue Glu133 is the Proton donor of the active site. Thr172 lines the (2E)-4-hydroxy-3-methylbut-2-enyl diphosphate pocket. Position 200 (Cys200) interacts with [4Fe-4S] cluster. (2E)-4-hydroxy-3-methylbut-2-enyl diphosphate contacts are provided by Ser228, Asn230, and Ser273. The dimethylallyl diphosphate site is built by Ser228, Asn230, and Ser273. The isopentenyl diphosphate site is built by Ser228, Asn230, and Ser273.

The protein belongs to the IspH family. Requires [4Fe-4S] cluster as cofactor.

The catalysed reaction is isopentenyl diphosphate + 2 oxidized [2Fe-2S]-[ferredoxin] + H2O = (2E)-4-hydroxy-3-methylbut-2-enyl diphosphate + 2 reduced [2Fe-2S]-[ferredoxin] + 2 H(+). It catalyses the reaction dimethylallyl diphosphate + 2 oxidized [2Fe-2S]-[ferredoxin] + H2O = (2E)-4-hydroxy-3-methylbut-2-enyl diphosphate + 2 reduced [2Fe-2S]-[ferredoxin] + 2 H(+). The protein operates within isoprenoid biosynthesis; dimethylallyl diphosphate biosynthesis; dimethylallyl diphosphate from (2E)-4-hydroxy-3-methylbutenyl diphosphate: step 1/1. Its pathway is isoprenoid biosynthesis; isopentenyl diphosphate biosynthesis via DXP pathway; isopentenyl diphosphate from 1-deoxy-D-xylulose 5-phosphate: step 6/6. Its function is as follows. Catalyzes the conversion of 1-hydroxy-2-methyl-2-(E)-butenyl 4-diphosphate (HMBPP) into a mixture of isopentenyl diphosphate (IPP) and dimethylallyl diphosphate (DMAPP). Acts in the terminal step of the DOXP/MEP pathway for isoprenoid precursor biosynthesis. This is 4-hydroxy-3-methylbut-2-enyl diphosphate reductase from Macrococcus caseolyticus (strain JCSC5402) (Macrococcoides caseolyticum).